A 547-amino-acid polypeptide reads, in one-letter code: Myrosinase 2 (547 aa).

The signal sequence occupies residues Met1–Cys28. 3 disulfides stabilise this stretch: Cys36–Cys460, Cys44–Cys456, and Cys236–Cys244. A beta-D-glucoside is bound by residues Gln69, His171, and Asn216–Gln217. An N-linked (GlcNAc...) asparagine glycan is attached at Asn340. Tyr359 is an a beta-D-glucoside binding site. N-linked (GlcNAc...) asparagine glycosylation is present at Asn384. Residues Glu430, Trp479, Glu486 to Phe487, and Phe495 contribute to the a beta-D-glucoside site. Glu430 acts as the Nucleophile in catalysis. Asn504 carries an N-linked (GlcNAc...) asparagine glycan.

This sequence belongs to the glycosyl hydrolase 1 family. Interacts with MVP1. Expressed in phloem-associated cells.

The catalysed reaction is a thioglucoside + H2O = a sugar + a thiol.. Its function is as follows. May degrade glucosinolates (glucose residue linked by a thioglucoside bound to an amino acid derivative) to glucose, sulfate and any of the products: thiocyanates, isothiocyanates, nitriles, epithionitriles or oxazolidine-2-thiones. These toxic degradation products can deter insect herbivores. Seems to function in abscisic acid (ABA) and methyl jasmonate (MeJA) signaling in guard cells. Functionally redundant with TGG1. The sequence is that of Myrosinase 2 from Arabidopsis thaliana (Mouse-ear cress).